The chain runs to 373 residues: Putative protein YfkA (373 aa).

In terms of domain architecture, Radical SAM core spans 26-256; it reads YGDMQLTNVE…DIRDENTWML (231 aa). Cys-42, Cys-46, and Cys-49 together coordinate [4Fe-4S] cluster.

Belongs to the radical SAM superfamily. The cofactor is [4Fe-4S] cluster.

The chain is Putative protein YfkA (yfkA) from Bacillus subtilis (strain 168).